The sequence spans 156 residues: Snaclec A10 (156 aa).

An N-terminal signal peptide occupies residues methionine 1–alanine 23. Cystine bridges form between cysteine 27–cysteine 38, cysteine 55–cysteine 154, and cysteine 129–cysteine 146. The region spanning tyrosine 34–glutamate 155 is the C-type lectin domain.

This sequence belongs to the snaclec family. As to quaternary structure, heterodimer; disulfide-linked. Expressed by the venom gland.

Its subcellular location is the secreted. In terms of biological role, interferes with one step of hemostasis (modulation of platelet aggregation, or coagulation cascade, for example). The protein is Snaclec A10 of Macrovipera lebetinus (Levantine viper).